A 353-amino-acid polypeptide reads, in one-letter code: Carbamoyl phosphate synthase arginine-specific small chain (353 aa).

A CPSase region spans residues 1–162; that stretch reads MEGYLVLEDG…EISTFGDGNK (162 aa). Serine 44, glycine 210, and glycine 212 together coordinate L-glutamine. The Glutamine amidotransferase type-1 domain maps to 163–349; it reads HIALIDFGYK…LKNVIPARRE (187 aa). Residue cysteine 237 is the Nucleophile of the active site. Positions 238, 241, 279, and 282 each coordinate L-glutamine. Catalysis depends on residues histidine 322 and glutamate 324.

It belongs to the CarA family. As to quaternary structure, composed of two chains; the small (or glutamine) chain promotes the hydrolysis of glutamine to ammonia, which is used by the large (or ammonia) chain to synthesize carbamoyl phosphate. Tetramer of heterodimers (alpha,beta)4.

It catalyses the reaction hydrogencarbonate + L-glutamine + 2 ATP + H2O = carbamoyl phosphate + L-glutamate + 2 ADP + phosphate + 2 H(+). The enzyme catalyses L-glutamine + H2O = L-glutamate + NH4(+). It participates in amino-acid biosynthesis; L-arginine biosynthesis; carbamoyl phosphate from bicarbonate: step 1/1. In terms of biological role, small subunit of the glutamine-dependent carbamoyl phosphate synthetase (CPSase). CPSase catalyzes the formation of carbamoyl phosphate from the ammonia moiety of glutamine, carbonate, and phosphate donated by ATP, constituting the first step of the biosynthetic pathway leading to arginine and/or urea. The small subunit (glutamine amidotransferase) binds and cleaves glutamine to supply the large subunit with the substrate ammonia. This chain is Carbamoyl phosphate synthase arginine-specific small chain, found in Bacillus subtilis (strain 168).